Reading from the N-terminus, the 590-residue chain is G protein-coupled receptor kinase 5 (590 aa).

Residues methionine 1–threonine 185 are N-terminal. Residues glycine 20–isoleucine 39 are interaction with calmodulin. The 119-residue stretch at tyrosine 53–leucine 171 folds into the RGS domain. Residues phenylalanine 186–phenylalanine 448 form the Protein kinase domain. Residues leucine 192 to valine 200 and lysine 215 each bind ATP. Aspartate 311 (proton acceptor) is an active-site residue. The Nuclear localization signal signature appears at arginine 388–glutamate 395. The AGC-kinase C-terminal domain occupies arginine 449–glutamate 514. Serine 484 carries the post-translational modification Phosphoserine; by autocatalysis. Threonine 485 bears the Phosphothreonine; by autocatalysis mark. Positions proline 546–serine 565 are sufficient for membrane localization. Residues leucine 554–serine 590 form a disordered region. Residues asparagine 561–serine 590 are compositionally biased toward low complexity. A Phosphoserine modification is found at serine 579.

The protein belongs to the protein kinase superfamily. AGC Ser/Thr protein kinase family. GPRK subfamily. In terms of assembly, interacts with ST13 (via the C-terminus 303-319 AA). Interacts with TP53/p53. Interacts with HTR4 (via C-terminus 330-346 AA); this interaction is promoted by 5-HT (serotonin). Interacts with HDAC5. Interacts with GIT1. Autophosphorylated. Autophosphorylation may play a critical role in the regulation of GRK5 kinase activity. Highest levels in lung, heart, retina, lingual epithelium. Very little in brain, liver, kidney.

The protein resides in the cytoplasm. It localises to the nucleus. The protein localises to the cell membrane. It carries out the reaction [G-protein-coupled receptor] + ATP = [G-protein-coupled receptor]-phosphate + ADP + H(+). With respect to regulation, inhibited by calmodulin with an IC(50) of 50 nM. Calmodulin inhibits GRK5 association with receptor and phospholipid. Serine/threonine kinase that phosphorylates preferentially the activated forms of a variety of G-protein-coupled receptors (GPCRs). Such receptor phosphorylation initiates beta-arrestin-mediated receptor desensitization, internalization, and signaling events leading to their down-regulation. Phosphorylates a variety of GPCRs, including adrenergic receptors (Beta-2 adrenergic receptor), muscarinic acetylcholine receptors (more specifically Gi-coupled M2/M4 subtypes), dopamine receptors and opioid receptors. In addition to GPCRs, also phosphorylates various substrates: Hsc70-interacting protein/ST13, TP53/p53, HDAC5, and arrestin-1/ARRB1. Phosphorylation of ARRB1 by GRK5 inhibits G-protein independent MAPK1/MAPK3 signaling downstream of 5HT4-receptors. Phosphorylation of HDAC5, a repressor of myocyte enhancer factor 2 (MEF2) leading to nuclear export of HDAC5 and allowing MEF2-mediated transcription. Phosphorylation of TP53/p53, a crucial tumor suppressor, inhibits TP53/p53-mediated apoptosis. Phosphorylation of ST13 regulates internalization of the chemokine receptor. Phosphorylates rhodopsin (RHO) (in vitro) and a non G-protein-coupled receptor, LRP6 during Wnt signaling (in vitro). In Bos taurus (Bovine), this protein is G protein-coupled receptor kinase 5 (GRK5).